We begin with the raw amino-acid sequence, 29 residues long: U-homostoxin-Hdu1a (29 aa).

O-linked (GlcNAc...) threonine glycosylation occurs at Thr1. Cystine bridges form between Cys7/Cys19 and Cys10/Cys25.

This sequence belongs to the sea anemone BBH family.

It localises to the secreted. Its subcellular location is the nematocyst. The protein is U-homostoxin-Hdu1a of Homostichanthus duerdeni (Sea anemone).